A 272-amino-acid polypeptide reads, in one-letter code: Cytochrome b-c1 complex subunit Rieske, mitochondrial (272 aa).

Over 77-104 the chain is Mitochondrial matrix; it reads VHNDVTVPDFSAYRREDVMDATTSSQTS. Residues 105 to 138 form a helical membrane-spanning segment; sequence SEDRKGFSYLVTATACVATAYAAKNVVTQFISSL. The Mitochondrial intermembrane portion of the chain corresponds to 139 to 272; the sequence is SASADVLALS…FVGDDLVVVG (134 aa). The Rieske domain maps to 185–270; sequence EAEVDVSKLR…YQFVGDDLVV (86 aa). Residues Cys215, His217, Leu218, Cys234, His237, and Ser239 each contribute to the [2Fe-2S] cluster site. The cysteines at positions 220 and 236 are disulfide-linked.

The protein belongs to the Rieske iron-sulfur protein family. As to quaternary structure, component of the ubiquinol-cytochrome c oxidoreductase (cytochrome b-c1 complex, complex III, CIII), a multisubunit enzyme composed of 11 subunits. The complex is composed of 3 respiratory subunits cytochrome b, cytochrome c1 and Rieske protein UQCRFS1, 2 core protein subunits UQCRC1/QCR1 and UQCRC2/QCR2, and 6 low-molecular weight protein subunits UQCRH/QCR6, UQCRB/QCR7, UQCRQ/QCR8, UQCR10/QCR9, UQCR11/QCR10 and subunit 9, the cleavage product of Rieske protein UQCRFS1. The complex exists as an obligatory dimer and forms supercomplexes (SCs) in the inner mitochondrial membrane with NADH-ubiquinone oxidoreductase (complex I, CI) and cytochrome c oxidase (complex IV, CIV), resulting in different assemblies (supercomplex SCI(1)III(2)IV(1) and megacomplex MCI(2)III(2)IV(2)). Incorporation of the Rieske protein UQCRFS1 is the penultimate step in complex III assembly. Interacts with TTC19, which is involved in the clearance of UQCRFS1 fragments. In terms of assembly, component of the ubiquinol-cytochrome c oxidoreductase (cytochrome b-c1 complex, complex III, CIII). Subunit 9 corresponds to the mitochondrial targeting sequence (MTS) of Rieske protein UQCRFS1. It is retained after processing and incorporated inside complex III, where it remains bound to the complex and localizes between the 2 core subunits UQCRC1/QCR1 and UQCRC2/QCR2. [2Fe-2S] cluster serves as cofactor. In terms of processing, proteolytic processing is necessary for the correct insertion of UQCRFS1 in the complex III dimer. Several fragments are generated during UQCRFS1 insertion, most probably due to the endogenous matrix-processing peptidase (MPP) activity of the 2 core protein subunits UQCRC1/QCR1 and UQCRC2/QCR2, which are homologous to the 2 mitochondrial-processing peptidase (MPP) subunits beta-MPP and alpha-MPP respectively. The action of the protease is also necessary for the clearance of the UQCRFS1 fragments.

It is found in the mitochondrion inner membrane. It carries out the reaction a quinol + 2 Fe(III)-[cytochrome c](out) = a quinone + 2 Fe(II)-[cytochrome c](out) + 2 H(+)(out). Functionally, component of the ubiquinol-cytochrome c oxidoreductase, a multisubunit transmembrane complex that is part of the mitochondrial electron transport chain which drives oxidative phosphorylation. The respiratory chain contains 3 multisubunit complexes succinate dehydrogenase (complex II, CII), ubiquinol-cytochrome c oxidoreductase (cytochrome b-c1 complex, complex III, CIII) and cytochrome c oxidase (complex IV, CIV), that cooperate to transfer electrons derived from NADH and succinate to molecular oxygen, creating an electrochemical gradient over the inner membrane that drives transmembrane transport and the ATP synthase. The cytochrome b-c1 complex catalyzes electron transfer from ubiquinol to cytochrome c, linking this redox reaction to translocation of protons across the mitochondrial inner membrane, with protons being carried across the membrane as hydrogens on the quinol. In the process called Q cycle, 2 protons are consumed from the matrix, 4 protons are released into the intermembrane space and 2 electrons are passed to cytochrome c. The Rieske protein is a catalytic core subunit containing a [2Fe-2S] iron-sulfur cluster. It cycles between 2 conformational states during catalysis to transfer electrons from the quinol bound in the Q(0) site in cytochrome b to cytochrome c1. Incorporation of UQCRFS1 is the penultimate step in complex III assembly. Its function is as follows. Component of the ubiquinol-cytochrome c oxidoreductase (cytochrome b-c1 complex, complex III, CIII). UQCRFS1 undergoes proteolytic processing once it is incorporated in the complex III dimer. One of the fragments, called subunit 9, corresponds to its mitochondrial targeting sequence (MTS). The proteolytic processing is necessary for the correct insertion of UQCRFS1 in the complex III dimer, but the persistence of UQCRFS1-derived fragments may prevent newly imported UQCRFS1 to be processed and assembled into complex III and is detrimental for the complex III structure and function. This chain is Cytochrome b-c1 complex subunit Rieske, mitochondrial (UQCRFS1), found in Gallus gallus (Chicken).